A 220-amino-acid polypeptide reads, in one-letter code: Vesicle-associated membrane protein 7 (220 aa).

A2 is subject to N-acetylalanine. The Cytoplasmic segment spans residues 2 to 188 (AILFAVVARG…ARAMCMKNLK (187 aa)). The region spanning 7-110 (VVARGTTILA…AMNSEFSSVL (104 aa)) is the Longin domain. Residues 125–185 (KVMETQAQVD…RNLARAMCMK (61 aa)) form the v-SNARE coiled-coil homology domain. Phosphoserine occurs at positions 167 and 168. Residues 189–209 (LTIIIIIISVVFIYIIVSPLC) form a helical; Anchor for type IV membrane protein membrane-spanning segment. The Vesicular portion of the chain corresponds to 210–220 (GGFTWPNCVKK).

This sequence belongs to the synaptobrevin family. As to quaternary structure, component of the SNARE complex composed of STX4, SNAP23 and VAMP7 that binds SYT7 during lysosomal exocytosis. Component of the SNARE complex composed of STX7, STX8, VAMP7 and VTI1B that is required for heterotypic fusion of late endosomes with lysosomes. May interact with STX17. Interacts with PICALM. Interacts with RAB21.

The protein localises to the cytoplasmic vesicle. Its subcellular location is the secretory vesicle membrane. It localises to the golgi apparatus. It is found in the trans-Golgi network membrane. The protein resides in the late endosome membrane. The protein localises to the lysosome membrane. Its subcellular location is the endoplasmic reticulum membrane. It localises to the phagosome membrane. It is found in the synapse. The protein resides in the synaptosome. In terms of biological role, involved in the targeting and/or fusion of transport vesicles to their target membrane during transport of proteins from the early endosome to the lysosome. Required for heterotypic fusion of late endosomes with lysosomes and homotypic lysosomal fusion. Required for calcium regulated lysosomal exocytosis. Involved in the export of chylomicrons from the endoplasmic reticulum to the cis Golgi. Required for exocytosis of mediators during eosinophil and neutrophil degranulation, and target cell killing by natural killer cells. Required for focal exocytosis of late endocytic vesicles during phagosome formation. This chain is Vesicle-associated membrane protein 7 (VAMP7), found in Bos taurus (Bovine).